A 238-amino-acid chain; its full sequence is Ribitol-5-phosphate cytidylyltransferase (238 aa).

CTP contacts are provided by residues 7–10 (LAGG) and 81–87 (GDDRNHT).

It belongs to the IspD/TarI cytidylyltransferase family. TarI subfamily.

The catalysed reaction is D-ribitol 5-phosphate + CTP + H(+) = CDP-L-ribitol + diphosphate. It participates in cell wall biogenesis; poly(ribitol phosphate) teichoic acid biosynthesis. Functionally, catalyzes the transfer of the cytidylyl group of CTP to D-ribitol 5-phosphate. The sequence is that of Ribitol-5-phosphate cytidylyltransferase from Staphylococcus epidermidis (strain ATCC 35984 / DSM 28319 / BCRC 17069 / CCUG 31568 / BM 3577 / RP62A).